Consider the following 363-residue polypeptide: MTDRDYKIAVLPGDGIGPEVMAQAHKVLDAIEQKHGIRFSREEHDVGGIAIDNHGCPLPESTLRACEEADAVLFGSVGGPKWEHLPPNEQPERGALLPLRKHFQLFCNLRPAQIHQGLEAFSPLRADISARGFDIVVVRELTGGIYFGQPKGREGEGAHEKAFDTEVYHRFEIERIARIAFESARLRRKKVCSIDKANVLQSSILWREVVSEIAKEYPDVSLSHMYIDNATMQLIKDPAQFDVMLCSNIFGDILSDECAMITGSMGMLPSASMNESKFGLYEPAGGSAPDIAGKNIANPVAQILSAALMLRYSLGEEAAARDIENAVSQALAAGELTADLAGSKPALSTSAMGDKIASYILNS.

79–92 (GPKWEHLPPNEQPE) contacts NAD(+). Residues R100, R110, R139, and D228 each contribute to the substrate site. Residues D228, D252, and D256 each contribute to the Mg(2+) site. Residue 286 to 298 (GSAPDIAGKNIAN) participates in NAD(+) binding.

This sequence belongs to the isocitrate and isopropylmalate dehydrogenases family. LeuB type 1 subfamily. As to quaternary structure, homodimer. The cofactor is Mg(2+). Mn(2+) serves as cofactor.

It is found in the cytoplasm. The catalysed reaction is (2R,3S)-3-isopropylmalate + NAD(+) = 4-methyl-2-oxopentanoate + CO2 + NADH. It functions in the pathway amino-acid biosynthesis; L-leucine biosynthesis; L-leucine from 3-methyl-2-oxobutanoate: step 3/4. In terms of biological role, catalyzes the oxidation of 3-carboxy-2-hydroxy-4-methylpentanoate (3-isopropylmalate) to 3-carboxy-4-methyl-2-oxopentanoate. The product decarboxylates to 4-methyl-2 oxopentanoate. The protein is 3-isopropylmalate dehydrogenase of Vibrio cholerae serotype O1 (strain ATCC 39315 / El Tor Inaba N16961).